The chain runs to 472 residues: RING-H2 finger protein ATL13 (472 aa).

The helical transmembrane segment at 51–71 (ILLIIIILSIIFFISGLLHLL) threads the bilayer. The RING-type; atypical zinc-finger motif lies at 134–176 (CAVCLCEFETEDKLRLLPKCSHAFHMDCIDTWLLSHSTCPLCR). The interval 320–340 (VSTKKQSSKNRGLPGHRTAMS) is disordered.

This sequence belongs to the RING-type zinc finger family. ATL subfamily.

The protein localises to the membrane. It catalyses the reaction S-ubiquitinyl-[E2 ubiquitin-conjugating enzyme]-L-cysteine + [acceptor protein]-L-lysine = [E2 ubiquitin-conjugating enzyme]-L-cysteine + N(6)-ubiquitinyl-[acceptor protein]-L-lysine.. Its pathway is protein modification; protein ubiquitination. The sequence is that of RING-H2 finger protein ATL13 (ATL13) from Arabidopsis thaliana (Mouse-ear cress).